A 117-amino-acid chain; its full sequence is Large ribosomal subunit protein uL18 (117 aa).

The protein belongs to the universal ribosomal protein uL18 family. As to quaternary structure, part of the 50S ribosomal subunit; part of the 5S rRNA/L5/L18/L25 subcomplex. Contacts the 5S and 23S rRNAs.

Functionally, this is one of the proteins that bind and probably mediate the attachment of the 5S RNA into the large ribosomal subunit, where it forms part of the central protuberance. The protein is Large ribosomal subunit protein uL18 of Pseudoalteromonas atlantica (strain T6c / ATCC BAA-1087).